A 65-amino-acid chain; its full sequence is Large ribosomal subunit protein bL35 (65 aa).

The tract at residues methionine 1–arginine 30 is disordered. Over residues lysine 12 to arginine 30 the composition is skewed to basic residues.

The protein belongs to the bacterial ribosomal protein bL35 family.

In Alteromonas mediterranea (strain DSM 17117 / CIP 110805 / LMG 28347 / Deep ecotype), this protein is Large ribosomal subunit protein bL35.